The following is a 116-amino-acid chain: NADPH-dependent 7-cyano-7-deazaguanine reductase (116 aa).

Cys31 functions as the Thioimide intermediate in the catalytic mechanism. Asp38 functions as the Proton donor in the catalytic mechanism. Substrate-binding positions include 53–55 and 72–73; these read VEL and YE.

The protein belongs to the GTP cyclohydrolase I family. QueF type 1 subfamily.

The protein resides in the cytoplasm. The catalysed reaction is 7-aminomethyl-7-carbaguanine + 2 NADP(+) = 7-cyano-7-deazaguanine + 2 NADPH + 3 H(+). The protein operates within tRNA modification; tRNA-queuosine biosynthesis. Its function is as follows. Catalyzes the NADPH-dependent reduction of 7-cyano-7-deazaguanine (preQ0) to 7-aminomethyl-7-deazaguanine (preQ1). This Chloroherpeton thalassium (strain ATCC 35110 / GB-78) protein is NADPH-dependent 7-cyano-7-deazaguanine reductase.